The chain runs to 331 residues: Protein REVEILLE 6 (331 aa).

Residues 67-121 (TITKSRESWTEPEHDKFLEALQLFDRDWKKIEAFIGSKTVIQIRSHAQKYFLKVQ) enclose the HTH myb-type domain. The segment at residues 94–117 (WKKIEAFIGSKTVIQIRSHAQKYF) is a DNA-binding region (H-T-H motif). Disordered regions lie at residues 122 to 166 (KSGT…EPND), 203 to 237 (LPKA…GNVG), and 309 to 331 (SETA…EIST). Positions 150–165 (VQLQVPGSFKSTSEPN) are enriched in polar residues. A compositionally biased stretch (low complexity) spans 211–220 (NNNCSSSSEN). 2 stretches are compositionally biased toward basic and acidic residues: residues 226–235 (SNRDARDHGN) and 322–331 (LNKDPPEIST).

The protein localises to the nucleus. Its function is as follows. Probable transcription factor. RVE4, RVE6 and RVE8 are components of the circadian system acting synergistically to regulate flowering time, redundantly to regulate leaf growth, and antagonistically to regulate hypocotyl elongation; their action seems independent of ZTL and HY5. In Arabidopsis thaliana (Mouse-ear cress), this protein is Protein REVEILLE 6.